We begin with the raw amino-acid sequence, 128 residues long: Large ribosomal subunit protein bL12 (128 aa).

This sequence belongs to the bacterial ribosomal protein bL12 family. As to quaternary structure, homodimer. Part of the ribosomal stalk of the 50S ribosomal subunit. Forms a multimeric L10(L12)X complex, where L10 forms an elongated spine to which 2 to 4 L12 dimers bind in a sequential fashion. Binds GTP-bound translation factors.

Functionally, forms part of the ribosomal stalk which helps the ribosome interact with GTP-bound translation factors. Is thus essential for accurate translation. This is Large ribosomal subunit protein bL12 from Corynebacterium glutamicum (strain R).